The chain runs to 774 residues: MERPLCSHLCSCLAVLALLSPLSLAQYDSWPHYPEYFQQPAPEYHQPQAPANVAKIQLRLAGQKRKHSEGRVEVYYDGQWGTVCDDDFSIHAAHVVCRELGYVEAKSWTASSSYGKGEGPIWLDNLHCTGNEATLAACTSNGWGVTDCKHTEDVGVVCSDKRIPGFKFDNSLINQIENLNIQVEDIRIRAILSTYRKRTPVTEGYVEVKEGKTWKQICDKHWTAKNSRVICGMFGFPGERTYNAKVYKMFASRRKQRYWPFSMDCTGTEAHISSCKLGPQVSLDPMKNVTCENGLPAVVSCVPGQVFSPDGPSRFRKAYKPEQPLVRLRGGAYIGEGRVEVLKNGEWGTVCDDKWDLVSASVVCRELGFGSAKEAVTGSRLGQGIGPIHLNEIQCTGNEKSIIDCKFNTESQGCNHEEDAGVRCNTPAMGLQKKLRLNGGRNPYEGRVEVLVERNGSLVWGMVCGQNWGIVEAMVVCRQLGLGFASNAFQETWYWHGDVNSNKVVMSGVKCSGTELSLAHCRHDGEDVACPQGGVQYGAGVACSETAPDLVLNAEMVQQTTYLEDRPMFMLQCAMEENCLSASAAQTNPTTGYRRLLRFSSQIHNNGQSDFRPKNGRHAWIWHDCHRHYHSMEVFTHYDLLNLNGTKVAEGHKASFCLEDTECEGDIQKNYECANFGDQGITMGCWDMYRHDIDCQWVDITDVPPGDYLFQVVINPNFEVAESDYSNNIMKCRSRYDGHRIWMYNCHIGGSFSEETEKKFGHFSGLLNNQLSPQ.

The N-terminal stretch at 1–25 (MERPLCSHLCSCLAVLALLSPLSLA) is a signal peptide. SRCR domains lie at 58 to 159 (LRLA…VVCS), 188 to 302 (IRAI…VSCV), 326 to 425 (VRLR…VRCN), and 435 to 544 (LRLN…VACS). Disulfide bonds link C84/C148, C97/C158, C128/C138, C218/C291, C231/C301, C265/C275, C351/C414, C364/C424, and C395/C405. N288 is a glycosylation site (N-linked (GlcNAc...) asparagine). N455 carries N-linked (GlcNAc...) asparagine glycosylation. 3 cysteine pairs are disulfide-bonded: C464–C530, C477–C543, and C511–C521. A lysyl-oxidase like region spans residues 548–751 (PDLVLNAEMV…WMYNCHIGGS (204 aa)). Ca(2+) contacts are provided by D549 and L550. Disulfide bonds link C573–C625, C579–C695, C657–C673, and C663–C685. Cu cation contacts are provided by H626, H628, and H630. N-linked (GlcNAc...) asparagine glycosylation occurs at N644. The segment at residues 653-689 (KASFCLEDTECEGDIQKNYECANFGDQGITMGCWDMY) is a cross-link (lysine tyrosylquinone (Lys-Tyr)). Y689 is modified (2',4',5'-topaquinone). Ca(2+)-binding residues include E722, D724, N727, and N728. An intrachain disulfide couples C732 to C746.

This sequence belongs to the lysyl oxidase family. As to quaternary structure, component of some chromatin repressor complex. Interacts with SNAI1. Interacts with TAF10. Interacts with HSPA5. Interacts with EFEMP2. Cu cation is required as a cofactor. Lysine tyrosylquinone residue serves as cofactor. Post-translationally, the lysine tyrosylquinone cross-link (LTQ) is generated by condensation of the epsilon-amino group of a lysine with a topaquinone produced by oxidation of tyrosine. In terms of processing, N-glycosylated. N-glycosylation on Asn-455 and Asn-644 may be essential for proper folding and secretion; may be composed of a fucosylated carbohydrates attached to a trimannose N-linked glycan core.

The protein localises to the secreted. It localises to the extracellular space. It is found in the extracellular matrix. The protein resides in the basement membrane. Its subcellular location is the nucleus. The protein localises to the chromosome. It localises to the endoplasmic reticulum. The catalysed reaction is L-lysyl-[protein] + O2 + H2O = (S)-2-amino-6-oxohexanoyl-[protein] + H2O2 + NH4(+). Specifically inhibited by a mouse monoclonal antibody AB0023, inhibition occurs in a non-competitive manner. Mediates the post-translational oxidative deamination of lysine residues on target proteins leading to the formation of deaminated lysine (allysine). Acts as a transcription corepressor and specifically mediates deamination of trimethylated 'Lys-4' of histone H3 (H3K4me3), a specific tag for epigenetic transcriptional activation. Shows no activity against histone H3 when it is trimethylated on 'Lys-9' (H3K9me3) or 'Lys-27' (H3K27me3) or when 'Lys-4' is monomethylated (H3K4me1) or dimethylated (H3K4me2). Also mediates deamination of methylated TAF10, a member of the transcription factor IID (TFIID) complex, which induces release of TAF10 from promoters, leading to inhibition of TFIID-dependent transcription. LOXL2-mediated deamination of TAF10 results in transcriptional repression of genes required for embryonic stem cell pluripotency including POU5F1/OCT4, NANOG, KLF4 and SOX2. Involved in epithelial to mesenchymal transition (EMT) via interaction with SNAI1 and participates in repression of E-cadherin CDH1, probably by mediating deamination of histone H3. During EMT, involved with SNAI1 in negatively regulating pericentromeric heterochromatin transcription. SNAI1 recruits LOXL2 to pericentromeric regions to oxidize histone H3 and repress transcription which leads to release of heterochromatin component CBX5/HP1A, enabling chromatin reorganization and acquisition of mesenchymal traits. Interacts with the endoplasmic reticulum protein HSPA5 which activates the IRE1-XBP1 pathway of the unfolded protein response, leading to expression of several transcription factors involved in EMT and subsequent EMT induction. When secreted into the extracellular matrix, promotes cross-linking of extracellular matrix proteins by mediating oxidative deamination of peptidyl lysine residues in precursors to fibrous collagen and elastin. Acts as a regulator of sprouting angiogenesis, probably via collagen IV scaffolding. Acts as a regulator of chondrocyte differentiation, probably by regulating expression of factors that control chondrocyte differentiation. This chain is Lysyl oxidase homolog 2 (LOXL2), found in Pongo abelii (Sumatran orangutan).